The following is a 380-amino-acid chain: MAPNLRKSHPLLKMVNDSLIDLPTPSNISTWWNFGSLLGLCLMTQILTGLLLAMHYTADTTLAFSSVAHTCRNVQYGWLIRNLHANGASFFFICIYLHIGRGFYYGSYLYKETWNTGVILLLTLMATAFVGYVLPWGQMSFWGATVITNLFSAIPYIGQTLVEWAWGGFSVDNPTLTRFFALHFLLPFMIAGLTLIHLTFLHETGSNNPLGVSSNCDKIPFHPYFSTKDLLGFLLMIAPLLTLAMFSPNLLGDPENFTPANPLVTPPHIKPEWYFLFAYAILRSIPNKLGGVLALAASVLILFLAPFLHKSKQRTMTFRPLSQLLFWILVANLLILTWVGSQPVEHPFIIIGQIASLTYFTILLILFPLTSALENKMLNY.

A run of 4 helical transmembrane segments spans residues 34–54, 78–99, 114–134, and 179–199; these read FGSL…LLAM, WLIR…YLHI, WNTG…GYVL, and FFAL…IHLT. Heme b contacts are provided by H84 and H98. The heme b site is built by H183 and H197. Residue H202 participates in a ubiquinone binding. 4 consecutive transmembrane segments (helical) span residues 227–247, 289–309, 321–341, and 348–368; these read TKDL…AMFS, LGGV…PFLH, LSQL…WVGS, and FIII…ILFP.

The protein belongs to the cytochrome b family. In terms of assembly, the cytochrome bc1 complex contains 11 subunits: 3 respiratory subunits (MT-CYB, CYC1 and UQCRFS1), 2 core proteins (UQCRC1 and UQCRC2) and 6 low-molecular weight proteins (UQCRH/QCR6, UQCRB/QCR7, UQCRQ/QCR8, UQCR10/QCR9, UQCR11/QCR10 and a cleavage product of UQCRFS1). This cytochrome bc1 complex then forms a dimer. It depends on heme b as a cofactor.

The protein localises to the mitochondrion inner membrane. In terms of biological role, component of the ubiquinol-cytochrome c reductase complex (complex III or cytochrome b-c1 complex) that is part of the mitochondrial respiratory chain. The b-c1 complex mediates electron transfer from ubiquinol to cytochrome c. Contributes to the generation of a proton gradient across the mitochondrial membrane that is then used for ATP synthesis. The protein is Cytochrome b (MT-CYB) of Amazilia tzacatl (Rufous-tailed hummingbird).